Here is a 693-residue protein sequence, read N- to C-terminus: Golgin subfamily A member 6B (693 aa).

Positions 1–11 (MWPQPYLPPHP) are enriched in pro residues. Disordered regions lie at residues 1–72 (MWPQ…SQYQ), 497–551 (LPGE…VERR), 629–650 (NPADEPTPGAPAPQELGAAGEQ), and 660–679 (NNVEPAPGAAREGSPHDNPT). The stretch at 77–611 (ALESSSVTIS…KLLELQELVL (535 aa)) forms a coiled coil. Basic and acidic residues predominate over residues 537 to 551 (LPKEKADGTEQVERR).

It belongs to the GOLGA6 family.

This is Golgin subfamily A member 6B (GOLGA6B) from Homo sapiens (Human).